A 235-amino-acid polypeptide reads, in one-letter code: Transmembrane protein 215 (235 aa).

2 helical membrane-spanning segments follow: residues 12-32 (LVVA…VSGM) and 40-60 (IPLL…IALA). Positions 99-158 (SDLESGKGSSDELAKKAGLRGKPSLQGQGELPMASSITTPTPMEEGECQSPGQSGRREET) are disordered.

The protein localises to the membrane. The polypeptide is Transmembrane protein 215 (TMEM215) (Bos taurus (Bovine)).